The sequence spans 433 residues: MSRTIVIVGCGVFGLSTAVELAKNHSFDNIIAIDAEPVPSSMSAANDINKIVRPEYADLKYMKLALEAMEKWRNDPELSSVYFECGRLSTISKDPYRARFDEVAQRNLRKLLGDSALINLSSSEEIRKKYPSLFSNSPLRSDMQAVVNEHAGYANSAASLKLLELKARELGVEFVFGKAGKFKKFVVNHSETDIDKNDNHVSVQTEDGTIYHADTILLAVGAYLNAYLNTSHRVCAKGLPVAHIQLTDEEFKTYKNMPIIFDPDCAYAFPPYPVTKLIKLASTGYEYVCNVETDYDENSKVVSIPHSGPSKSSLPKYAIIQMRRFLDTFLPDLADRSLINTKMCWISDTEDANFLIDKVPQFDNVFVANGDSGHAFKFLPNIGRYIAQRILGDLSEEWKDAWRWREDDKASELKWRCVRSLIDYKDAEFTYDK.

A signal peptide spans 1–18 (MSRTIVIVGCGVFGLSTA). N-linked (GlcNAc...) asparagine glycosylation is found at Asn-24, Asn-119, Asn-188, and Asn-229.

This sequence belongs to the MSOX/MTOX family. As to quaternary structure, monomer. It depends on FAD as a cofactor.

Its subcellular location is the secreted. The protein localises to the cytoplasm. The protein resides in the nucleus. The catalysed reaction is L-saccharopine + O2 + H2O = (S)-2-amino-6-oxohexanoate + L-glutamate + H2O2. This is L-saccharopine oxidase from Schizosaccharomyces pombe (strain 972 / ATCC 24843) (Fission yeast).